We begin with the raw amino-acid sequence, 227 residues long: Putative ankyrin repeat protein L45 (227 aa).

6 ANK repeats span residues 38–66 (FETN…NINH), 78–107 (CLEE…NIFH), 108–137 (NENC…DVRA), 139–167 (NDYA…DVRS), 168–197 (CDSY…NYRA), and 199–227 (NHHA…GITK).

This is Putative ankyrin repeat protein L45 from Acanthamoeba polyphaga mimivirus (APMV).